Here is a 51-residue protein sequence, read N- to C-terminus: Ribosome biogenesis protein Nop10 (51 aa).

Belongs to the NOP10 family.

Its function is as follows. Involved in ribosome biogenesis; more specifically in 18S rRNA pseudouridylation and in cleavage of pre-rRNA. This Methanococcus maripaludis (strain C5 / ATCC BAA-1333) protein is Ribosome biogenesis protein Nop10.